Reading from the N-terminus, the 419-residue chain is Protein FAM217A (419 aa).

4 disordered regions span residues 1–23 (MGRK…QENL), 100–119 (DKRN…LSES), 234–298 (PSSS…SRSL), and 362–388 (PIPL…HRKS). A compositionally biased stretch (polar residues) spans 7–23 (ESCSANPHSSSISQENL). A compositionally biased stretch (polar residues) spans 284-298 (SLSTAGKSKSNSRSL). Residues 378–388 (PRTKKKCHRKS) show a composition bias toward basic residues.

It belongs to the FAM217 family.

The sequence is that of Protein FAM217A (Fam217a) from Rattus norvegicus (Rat).